The chain runs to 284 residues: Undecaprenyl-diphosphatase (284 aa).

A run of 8 helical transmembrane segments spans residues 7 to 27 (IILG…TGHL), 44 to 64 (EMFD…LYFH), 90 to 110 (LWLK…PLND), 116 to 136 (FYHF…FIVI), 167 to 187 (VLSL…ALLV), 197 to 217 (FTFF…ILHF), 229 to 249 (FGVL…AIKF), and 259 to 279 (FTFF…YAMF).

This sequence belongs to the UppP family.

The protein resides in the cell membrane. It catalyses the reaction di-trans,octa-cis-undecaprenyl diphosphate + H2O = di-trans,octa-cis-undecaprenyl phosphate + phosphate + H(+). Functionally, catalyzes the dephosphorylation of undecaprenyl diphosphate (UPP). Confers resistance to bacitracin. This chain is Undecaprenyl-diphosphatase, found in Lactococcus lactis subsp. lactis (strain IL1403) (Streptococcus lactis).